Reading from the N-terminus, the 88-residue chain is ATP synthase F(0) complex subunit f, mitochondrial (88 aa).

Residue alanine 2 is modified to N-acetylalanine. Residue serine 3 is modified to Phosphoserine. Lysine 16 is subject to N6-acetyllysine. A helical transmembrane segment spans residues 62-79; that stretch reads MVLAAYVVFSYCISYKEL.

Belongs to the ATPase F chain family. Component of the ATP synthase complex composed at least of ATP5F1A/subunit alpha, ATP5F1B/subunit beta, ATP5MC1/subunit c (homooctomer), MT-ATP6/subunit a, MT-ATP8/subunit 8, ATP5ME/subunit e, ATP5MF/subunit f, ATP5MG/subunit g, ATP5MK/subunit k, ATP5MJ/subunit j, ATP5F1C/subunit gamma, ATP5F1D/subunit delta, ATP5F1E/subunit epsilon, ATP5PF/subunit F6, ATP5PB/subunit b, ATP5PD/subunit d, ATP5PO/subunit OSCP. ATP synthase complex consists of a soluble F(1) head domain (subunits alpha(3) and beta(3)) - the catalytic core - and a membrane F(0) domain - the membrane proton channel (subunits c, a, 8, e, f, g, k and j). These two domains are linked by a central stalk (subunits gamma, delta, and epsilon) rotating inside the F1 region and a stationary peripheral stalk (subunits F6, b, d, and OSCP).

The protein resides in the mitochondrion. The protein localises to the mitochondrion inner membrane. Its function is as follows. Subunit f, of the mitochondrial membrane ATP synthase complex (F(1)F(0) ATP synthase or Complex V) that produces ATP from ADP in the presence of a proton gradient across the membrane which is generated by electron transport complexes of the respiratory chain. ATP synthase complex consist of a soluble F(1) head domain - the catalytic core - and a membrane F(1) domain - the membrane proton channel. These two domains are linked by a central stalk rotating inside the F(1) region and a stationary peripheral stalk. During catalysis, ATP synthesis in the catalytic domain of F(1) is coupled via a rotary mechanism of the central stalk subunits to proton translocation. In vivo, can only synthesize ATP although its ATP hydrolase activity can be activated artificially in vitro. Part of the complex F(0) domain. The protein is ATP synthase F(0) complex subunit f, mitochondrial of Mus musculus (Mouse).